The chain runs to 229 residues: Flagellar L-ring protein (229 aa).

The first 25 residues, 1-25 (MKQVRLLPPAPVRAVCALAVAALAG), serve as a signal peptide directing secretion. A lipid anchor (N-palmitoyl cysteine) is attached at C26. C26 carries S-diacylglycerol cysteine lipidation.

The protein belongs to the FlgH family. The basal body constitutes a major portion of the flagellar organelle and consists of four rings (L,P,S, and M) mounted on a central rod.

The protein localises to the cell outer membrane. It is found in the bacterial flagellum basal body. Assembles around the rod to form the L-ring and probably protects the motor/basal body from shearing forces during rotation. This is Flagellar L-ring protein from Burkholderia ambifaria (strain ATCC BAA-244 / DSM 16087 / CCUG 44356 / LMG 19182 / AMMD) (Burkholderia cepacia (strain AMMD)).